The sequence spans 526 residues: GMP synthase [glutamine-hydrolyzing] (526 aa).

The region spanning 8–208 is the Glutamine amidotransferase type-1 domain; it reads CILIIDFGSQ…AVDICRCEVT (201 aa). The active-site Nucleophile is Cys85. Residues His182 and Glu184 contribute to the active site. Positions 209-401 constitute a GMPS ATP-PPase domain; it reads WKPVYIVKNI…LGLPLNVVNQ (193 aa). Residue 236–242 participates in ATP binding; that stretch reads SGGIDSL.

In terms of assembly, homodimer.

The enzyme catalyses XMP + L-glutamine + ATP + H2O = GMP + L-glutamate + AMP + diphosphate + 2 H(+). It participates in purine metabolism; GMP biosynthesis; GMP from XMP (L-Gln route): step 1/1. Functionally, catalyzes the synthesis of GMP from XMP. This chain is GMP synthase [glutamine-hydrolyzing], found in Blochmanniella floridana.